The following is a 29-amino-acid chain: Cytochrome b6-f complex subunit 8 (29 aa).

The chain crosses the membrane as a helical span at residues 3–23 (IVSIGWAALMVVFTFSLSLVV).

It belongs to the PetN family. The 4 large subunits of the cytochrome b6-f complex are cytochrome b6, subunit IV (17 kDa polypeptide, PetD), cytochrome f and the Rieske protein, while the 4 small subunits are PetG, PetL, PetM and PetN. The complex functions as a dimer.

Its subcellular location is the plastid. It is found in the chloroplast thylakoid membrane. Component of the cytochrome b6-f complex, which mediates electron transfer between photosystem II (PSII) and photosystem I (PSI), cyclic electron flow around PSI, and state transitions. This Zygnema circumcarinatum (Green alga) protein is Cytochrome b6-f complex subunit 8.